The primary structure comprises 945 residues: Netrin receptor UNC5B (945 aa).

The first 26 residues, 1-26 (MRARSGVRSALLLALLLCWDPTPSLA), serve as a signal peptide directing secretion. Topologically, residues 27–377 (GVDSAGQVLP…LETSGDVALY (351 aa)) are extracellular. An Ig-like domain is found at 48 to 145 (PYFLLEPQDA…SGTTKSRRAY (98 aa)). 9 cysteine pairs are disulfide-bonded: C69-C130, C81-C128, C174-C225, C258-C295, C262-C299, C273-C285, C314-C348, C318-C353, and C326-C338. In terms of domain architecture, Ig-like C2-type spans 153-242 (KNFDQEPLAK…KRRSTTATVI (90 aa)). N-linked (GlcNAc...) asparagine glycosylation is present at N222. TSP type-1 domains lie at 246–300 (NGGW…TVCP) and 302–354 (DGAW…GLCV). N-linked (GlcNAc...) asparagine glycosylation is present at N347. Residues 378–398 (AGLVVAVFVVVAVLMAVGVIV) traverse the membrane as a helical segment. Over 399–945 (YRRNCRDFDT…LVAMATDGDC (547 aa)) the chain is Cytoplasmic. C403 carries the S-palmitoyl cysteine lipid modification. Residues 543–686 (SSVSGTFGCL…LGTYVFMGES (144 aa)) form the ZU5 domain. Y581 bears the Phosphotyrosine mark. The interval 689-838 (RSAVKRLQLA…AETPAGSLDA (150 aa)) is UPA domain. The interaction with DCC stretch occupies residues 707–725 (SLEYSLRVYCLEDTPVALK). Positions 865-943 (KICSSLDAPN…EMLVAMATDG (79 aa)) constitute a Death domain.

It belongs to the unc-5 family. In terms of assembly, interacts with the cytoplasmic part of DCC. Interacts with GNAI2 via its cytoplasmic part. Interacts (via death domain) with DAPK1 (via death domain). Interacts (via extracellular domain) with FLRT2 and FLRT3 (via extracellular domain), but has higher affinity for FLRT3. Identified in a complex with FLRT3 and ADGRL3; does not interact with ADGRL3 by itself. Phosphorylated on cytoplasmic tyrosine residues. In terms of processing, palmitoylation is required for pro-apoptotic activity, but not for location at lipid rafts. Post-translationally, proteolytically cleaved by caspases during apoptosis. The cleavage does not take place when the receptor is associated with netrin ligand. Its cleavage by caspases is required to induce apoptosis. As to expression, highly expressed in brain. Expressed in lung during late development. Expressed during early blood vessel formation, in the semicircular canal and in a dorsal to ventral gradient in the retina.

It is found in the cell membrane. It localises to the membrane raft. Receptor for netrin required for axon guidance. Mediates axon repulsion of neuronal growth cones in the developing nervous system upon ligand binding. Axon repulsion in growth cones may be caused by its association with DCC that may trigger signaling for repulsion. Functions as a netrin receptor that negatively regulates vascular branching during angiogenesis. Mediates retraction of tip cell filopodia on endothelial growth cones in response to netrin. It also acts as a dependence receptor required for apoptosis induction when not associated with netrin ligand. Mediates apoptosis by activating DAPK1. In the absence of NTN1, activates DAPK1 by reducing its autoinhibitory phosphorylation at Ser-308 thereby increasing its catalytic activity. This Mus musculus (Mouse) protein is Netrin receptor UNC5B (Unc5b).